Reading from the N-terminus, the 352-residue chain is Gap junction alpha-4 protein (352 aa).

At 2–23 the chain is on the cytoplasmic side; it reads GDWEFLEKLLDQVQEHSTSIGK. A helical membrane pass occupies residues 24 to 46; that stretch reads IWLMVLFIFRILILGLAGESVWG. Residues 47–76 are Extracellular-facing; it reads DEQSDFTCNTEQPGCTNVCYDKAFPISHVR. The chain crosses the membrane as a helical span at residues 77 to 99; that stretch reads YWVLQFLFVSTPTLFYLGHVIYL. Over 100–153 the chain is Cytoplasmic; that stretch reads SRKEEKLKQKESELRALDDKEQVEQAIAIIEKKKLKLYIQEDGTVKIKGALMYT. The helical transmembrane segment at 154 to 176 threads the bilayer; it reads YLTSVIFKSIFEAGFLLGQWYLY. Over 177 to 208 the chain is Extracellular; it reads GFVMTPIYVCERVPCPHKVDCFVSRPMEKTIF. The chain crosses the membrane as a helical span at residues 209–231; the sequence is IIFMLVVSLISLFLNVLELIHLI. Residues 232 to 352 are Cytoplasmic-facing; the sequence is CKSMIHALKK…SSSASKKQYV (121 aa). Residues 332–352 are disordered; the sequence is HSTVEKASTRASSSASKKQYV. Positions 340–352 are enriched in low complexity; that stretch reads TRASSSASKKQYV.

It belongs to the connexin family. Alpha-type (group II) subfamily. A connexon is composed of a hexamer of connexins. As to expression, expressed in ovarian somatic cells, heart, leg muscle, liver and eye but not in brain.

The protein resides in the cell membrane. Its subcellular location is the cell junction. The protein localises to the gap junction. Its function is as follows. One gap junction consists of a cluster of closely packed pairs of transmembrane channels, the connexons, through which materials of low MW diffuse from one cell to a neighboring cell. This is Gap junction alpha-4 protein (gja4) from Xenopus laevis (African clawed frog).